Here is a 317-residue protein sequence, read N- to C-terminus: R-spondin-3 (317 aa).

Positions M1 to C20 are cleaved as a signal peptide. 3 FU repeats span residues S34 to G86, R92 to P135, and K139 to P183. Disulfide bonds link C41-C48, C45-C54, C57-C76, C80-C95, C98-C105, C102-C111, C114-C125, C129-C189, C195-C237, C206-C213, and C246-C253. N184 carries N-linked (GlcNAc...) asparagine glycosylation. One can recognise a TSP type-1 domain in the interval H194–K254. Over residues K251–F268 the composition is skewed to basic residues. The segment at K251–V317 is disordered. A compositionally biased stretch (basic and acidic residues) spans V274–E303. N300 carries an N-linked (GlcNAc...) asparagine glycan.

It belongs to the R-spondin family. In terms of assembly, binds heparin.

It localises to the secreted. Functionally, activator of the canonical Wnt signaling pathway by acting as a ligand for lgr4-6 receptors, which acts as a key regulator of angiogenesis. Upon binding to lgr4-6 (lgr4, lgr5 or lgr6), lgr4-6 associate with phosphorylated lrp6 and frizzled receptors that are activated by extracellular Wnt receptors, triggering the canonical Wnt signaling pathway to increase expression of target genes. Acts both in the canonical. Wnt/beta-catenin-dependent pathway and in non-canonical Wnt signaling pathway. Acts as a key regulator of angiogenesis by controlling vascular stability and pruning: acts by activating the non-canonical Wnt signaling pathway in endothelial cells. Can also amplify Wnt signaling pathway independently of LGR4-6 receptors, possibly by acting as a direct antagonistic ligand to RNF43 and ZNRF3. The polypeptide is R-spondin-3 (rspo3) (Danio rerio (Zebrafish)).